Reading from the N-terminus, the 406-residue chain is Calsequestrin-1 (406 aa).

The first 34 residues, 1–34 (MRATDRMGARAVSKLRLALLFVLVLGTPRSGVQG), serve as a signal peptide directing secretion. Tyr43 bears the Phosphotyrosine mark. At Ser81 the chain carries Phosphoserine. Phosphothreonine is present on Thr124. Phosphoserine is present on Ser216. N-linked (GlcNAc...) asparagine glycosylation is present at Asn350. The interval 382–406 (EGEINTEDDDDDDDDDDDDDDDDDD) is disordered.

The protein belongs to the calsequestrin family. In terms of assembly, monomer; increases in response to a depletion of intracellular calcium. Homodimer. Homotetramer and homopolymer. Can form linear homooligomers. Ca(2+) ions promote oligomerization. Interacts (via C-terminal end and preferentially with the monomeric form) with STIM1; this interaction increases in response to a depletion of intracellular calcium, decreases both STIM1 aggregation and clustering, interaction of STIM1 with ORAI1 and store-operated Ca(2+) entry (SOCE) activity. Interacts with ASPH and TRDN. Post-translationally, N-glycosylated. In terms of tissue distribution, detected in skeletal muscle and in smooth muscle from vas deferens, aorta and stomach (at protein level).

The protein resides in the endoplasmic reticulum. It localises to the sarcoplasmic reticulum. It is found in the sarcoplasmic reticulum lumen. Its subcellular location is the sarcoplasmic reticulum membrane. The protein localises to the mitochondrion matrix. Functionally, calsequestrin is a high-capacity, moderate affinity, calcium-binding protein and thus acts as an internal calcium store in muscle. Calcium ions are bound by clusters of acidic residues at the protein surface, often at the interface between subunits. Can bind around 80 Ca(2+) ions. Regulates the release of lumenal Ca(2+) via the calcium release channel RYR1; this plays an important role in triggering muscle contraction. Negatively regulates store-operated Ca(2+) entry (SOCE) activity. This chain is Calsequestrin-1 (Casq1), found in Rattus norvegicus (Rat).